Consider the following 171-residue polypeptide: Large ribosomal subunit protein uL10 (171 aa).

This sequence belongs to the universal ribosomal protein uL10 family. Part of the ribosomal stalk of the 50S ribosomal subunit. The N-terminus interacts with L11 and the large rRNA to form the base of the stalk. The C-terminus forms an elongated spine to which L12 dimers bind in a sequential fashion forming a multimeric L10(L12)X complex.

Forms part of the ribosomal stalk, playing a central role in the interaction of the ribosome with GTP-bound translation factors. The protein is Large ribosomal subunit protein uL10 of Corynebacterium jeikeium (strain K411).